We begin with the raw amino-acid sequence, 904 residues long: Nitrate reductase [NADH] 1 (904 aa).

Polar residues-rich tracts occupy residues M1–F10 and S39–I50. Residues M1–E65 form a disordered region. Acidic residues predominate over residues S56–E65. Mo-molybdopterin is bound at residue C183. Residues S531–L606 enclose the Cytochrome b5 heme-binding domain. Positions 566 and 589 each coordinate heme. Positions R647–Q759 constitute an FAD-binding FR-type domain. FAD is bound by residues R699–T702, V716–Y720, F721, F728, Q733–S735, and T786.

This sequence belongs to the nitrate reductase family. Homodimer. The cofactor is FAD. Requires heme as cofactor. Mo-molybdopterin serves as cofactor.

It carries out the reaction nitrite + NAD(+) + H2O = nitrate + NADH + H(+). Regulated by the nitrogen source and controlled by the circadian rhythm. Functionally, nitrate reductase is a key enzyme involved in the first step of nitrate assimilation in plants, fungi and bacteria. The polypeptide is Nitrate reductase [NADH] 1 (NIA1) (Nicotiana tabacum (Common tobacco)).